The sequence spans 367 residues: Quinolinate synthase (367 aa).

Iminosuccinate is bound by residues histidine 45 and serine 62. A [4Fe-4S] cluster-binding site is contributed by cysteine 109. Residues 140–142 (YVN) and serine 161 contribute to the iminosuccinate site. A [4Fe-4S] cluster-binding site is contributed by cysteine 229. Iminosuccinate is bound by residues 255-257 (HPE) and threonine 272. Cysteine 319 provides a ligand contact to [4Fe-4S] cluster.

The protein belongs to the quinolinate synthase family. Type 3 subfamily. It depends on [4Fe-4S] cluster as a cofactor.

The protein resides in the cytoplasm. It catalyses the reaction iminosuccinate + dihydroxyacetone phosphate = quinolinate + phosphate + 2 H2O + H(+). The protein operates within cofactor biosynthesis; NAD(+) biosynthesis; quinolinate from iminoaspartate: step 1/1. Functionally, catalyzes the condensation of iminoaspartate with dihydroxyacetone phosphate to form quinolinate. The sequence is that of Quinolinate synthase from Lysinibacillus sphaericus (strain C3-41).